The following is a 454-amino-acid chain: Protein phosphatase methylesterase 1 (454 aa).

Disordered stretches follow at residues 1 to 69 (MSEL…TGTV) and 181 to 203 (TTVTAASSVPGEGDETTGQAPPP). Low complexity predominate over residues 44-69 (AGPSPGGFPFDDDSSSASSVSSTGTV). Residues serine 240, aspartate 266, and histidine 412 contribute to the active site.

It belongs to the AB hydrolase superfamily.

It catalyses the reaction [phosphatase 2A protein]-C-terminal L-leucine methyl ester + H2O = [phosphatase 2A protein]-C-terminal L-leucine + methanol + H(+). Demethylates proteins that have been reversibly carboxymethylated. Demethylates the phosphatase PP2A catalytic subunit. This chain is Protein phosphatase methylesterase 1 (pme-1), found in Neurospora crassa (strain ATCC 24698 / 74-OR23-1A / CBS 708.71 / DSM 1257 / FGSC 987).